Consider the following 76-residue polypeptide: SAGKFIVIFKNGVSDDKIRETKDEVIAEGGTITNEYNMPGMKGFAGELTPQSLTKFQGLQGDLIDSIEEDGIVTTQ.

Ser1 bears the N-acetylserine mark.

Belongs to the protease inhibitor I9 family.

In terms of biological role, specifically inhibits an intracellular serine proteinase (proteinase A). The polypeptide is Serine proteinase inhibitor IA-2 (Pleurotus ostreatus (Oyster mushroom)).